Consider the following 288-residue polypeptide: Diaminopimelate epimerase (288 aa).

2 residues coordinate substrate: Asn-14 and Asn-67. The active-site Proton donor is Cys-76. Substrate contacts are provided by residues 77 to 78, Asn-166, Asn-199, and 217 to 218; these read GN and ER. Cys-226 (proton acceptor) is an active-site residue. 227 to 228 is a substrate binding site; the sequence is GT.

The protein belongs to the diaminopimelate epimerase family. Homodimer.

Its subcellular location is the cytoplasm. It carries out the reaction (2S,6S)-2,6-diaminopimelate = meso-2,6-diaminopimelate. It functions in the pathway amino-acid biosynthesis; L-lysine biosynthesis via DAP pathway; DL-2,6-diaminopimelate from LL-2,6-diaminopimelate: step 1/1. Catalyzes the stereoinversion of LL-2,6-diaminopimelate (L,L-DAP) to meso-diaminopimelate (meso-DAP), a precursor of L-lysine and an essential component of the bacterial peptidoglycan. This is Diaminopimelate epimerase from Bacillus thuringiensis (strain Al Hakam).